The primary structure comprises 653 residues: MNAADLGNTIISAEDSTLEWDRAGTETAATGVEVIQAVVKRLPNAPGVYRMVNTEGDVLYVGKARSLKKRVTNYAQGRGHSNRIERMIRETATMEFVVTRTETEALLLEANLIKRLRPRFNVLMRDDKSFPYILLTGNHPAPGIFKHRGARSRRGDYFGPFASAGAVGRTINSLQRAFLLRTCTDSVFESRTRPCLLYQIKRCSGPCTREISVEDYATLVKEAKDFLSGRSSTVKAEIATAMQEASQALDFERAAIYRDRLAALSHVQSHQGINPQGLEEADVFAIHQEGGQTCIQVFFFRTGQNWGNRAYFPKADPALGHGEVLGSFLAQFYDDKPCPRLILLSHPVEDQDLLAEALSARAGRKVQVSVPARGEKKDLTDHALQNAREALGRRLAETSSQARLLEGLAETFGLEAAPRRIEVYDNSHIMGTNAVGAMIVAGPEGFVKNQYRKFNIRSAEITPGDDFGMMREVMQRRFARLIKEQGLPGNGSEAEDSDASFPAWPDLILIDGGQGQMSAVRQILDDLGIADLVTAIGVAKGVDRDAGRERFFMEGRPPFTLPPRDPVLYFVQRLRDEAHRFAIGSHRARRKKEMVKNPLDEIAGIGPGRKRALLHHFGTAKAVSRAAVEDLMEVGGISESIARLIYNHFHESG.

The region spanning 44–122 is the GIY-YIG domain; that stretch reads NAPGVYRMVN…IKRLRPRFNV (79 aa). The UVR domain occupies 232-267; the sequence is STVKAEIATAMQEASQALDFERAAIYRDRLAALSHV.

This sequence belongs to the UvrC family. In terms of assembly, interacts with UvrB in an incision complex.

It is found in the cytoplasm. Functionally, the UvrABC repair system catalyzes the recognition and processing of DNA lesions. UvrC both incises the 5' and 3' sides of the lesion. The N-terminal half is responsible for the 3' incision and the C-terminal half is responsible for the 5' incision. The polypeptide is UvrABC system protein C (Chelativorans sp. (strain BNC1)).